A 475-amino-acid chain; its full sequence is Proton-coupled amino acid transporter 1 (475 aa).

Residues 1–15 (MSTQRLRNEDYHDYS) are compositionally biased toward basic and acidic residues. The interval 1-32 (MSTQRLRNEDYHDYSSTDVSPEESPSEGLGSF) is disordered. The Cytoplasmic segment spans residues 1-50 (MSTQRLRNEDYHDYSSTDVSPEESPSEGLGSFSPGSYQRLGENSSMTWFQ). A helical membrane pass occupies residues 51 to 71 (TLIHLLKGNIGTGLLGLPLAV). Topologically, residues 72-77 (KNAGLL) are extracellular. The helical transmembrane segment at 78 to 98 (LGPLSLLVIGIVAVHCMGILV) threads the bilayer. At 99–140 (KCAHHLCRRLNKPFLDYGDTVMYGLECSPSTWIRNHSHWGRR) the chain is on the cytoplasmic side. Residues 141-161 (IVDFFLVVTQLGFCCVYFVFL) form a helical membrane-spanning segment. The Extracellular portion of the chain corresponds to 162–189 (ADNFKQVIEAANGTTTNCNNNETVILTP). N-linked (GlcNAc...) asparagine glycans are attached at residues N173 and N182. C179 and C328 form a disulfide bridge. The helical transmembrane segment at 190-210 (TMDSRLYMLTFLPFLVLLSFI) threads the bilayer. The Cytoplasmic segment spans residues 211-214 (RNLR). The chain crosses the membrane as a helical span at residues 215–235 (ILSIFSLLANISMFVSLIMIY). The Extracellular portion of the chain corresponds to 236-256 (QFIVQRIPDPSHLPLVAPWKT). A helical transmembrane segment spans residues 257 to 277 (YPLFFGTAIFAFEGIGVVLPL). The Cytoplasmic portion of the chain corresponds to 278–288 (ENKMKDSQKFP). A helical transmembrane segment spans residues 289 to 309 (LILYLGMAIITVLYISLGSLG). Residues 310 to 341 (YLQFGADIKGSITLNLPNCWLYQSVKLLYSIG) lie on the Extracellular side of the membrane. A helical membrane pass occupies residues 342 to 362 (IFFTYALQFYVAAEIIIPAIV). Residues 363–371 (SRVPERFEL) lie on the Cytoplasmic side of the membrane. The chain crosses the membrane as a helical span at residues 372–392 (VVDLSARTAMVCVTCVLAVLI). The Extracellular portion of the chain corresponds to 393 to 396 (PRLD). A helical transmembrane segment spans residues 397 to 417 (LVISLVGSVSSSALALIIPPL). Topologically, residues 418–438 (LEVTTYYGEGISPLTITKDAL) are cytoplasmic. A helical membrane pass occupies residues 439–459 (ISILGFVGFVVGTYESLWELI). Residues 460-475 (QPSHSDSSTNSTSAFI) are Extracellular-facing. An N-linked (GlcNAc...) asparagine glycan is attached at N469.

The protein belongs to the amino acid/polyamine transporter 2 family. In terms of tissue distribution, widely expressed and predominantly expressed in brain. Within the brain, expression restricted to neurons and not detected in glial cells. Abundant in regions rich in neurons using glutamate and GABA such as Purkinje cells in the cerebellum and pyramidal cells in the hippocampus.

It is found in the cell membrane. The protein resides in the apical cell membrane. The protein localises to the lysosome membrane. It catalyses the reaction glycine(in) + H(+)(in) = glycine(out) + H(+)(out). The catalysed reaction is L-proline(out) + H(+)(out) = L-proline(in) + H(+)(in). The enzyme catalyses D-proline(out) + H(+)(out) = D-proline(in) + H(+)(in). It carries out the reaction L-alanine(in) + H(+)(in) = L-alanine(out) + H(+)(out). It catalyses the reaction D-alanine(in) + H(+)(in) = D-alanine(out) + H(+)(out). The catalysed reaction is L-serine(in) + H(+)(in) = L-serine(out) + H(+)(out). The enzyme catalyses D-serine(out) + H(+)(out) = D-serine(in) + H(+)(in). It carries out the reaction 4-aminobutanoate(in) + H(+)(in) = 4-aminobutanoate(out) + H(+)(out). It catalyses the reaction beta-alanine(in) + H(+)(in) = beta-alanine(out) + H(+)(out). Electrogenic proton/amino acid symporter with selectivity for small apolar L-amino acids, their D-enantiomers and selected amino acid derivatives such as 4-aminobutanoate/GABA. May be involved in the efflux from the lysosomal compartment of neutral amino acids resulting from proteolysis. May play a role in specifying sites for exocytosis in neurons. The chain is Proton-coupled amino acid transporter 1 from Rattus norvegicus (Rat).